A 148-amino-acid polypeptide reads, in one-letter code: SUMO-conjugating enzyme UBC9 (148 aa).

The UBC core domain occupies 1-147; it reads MASKRILKEL…ARTWTQKYAM (147 aa). Cysteine 85 functions as the Glycyl thioester intermediate in the catalytic mechanism.

This sequence belongs to the ubiquitin-conjugating enzyme family. Interacts with CHIP. In terms of tissue distribution, highest expression in young stems and old leaves. Lowest levels in floral buds, anthers and young leaves.

The protein operates within protein modification; protein sumoylation. Accepts the ubiquitin-like protein SUMO/SMT3 from the E1 complex and catalyzes its covalent attachment to other proteins. Mediates the selective degradation of short-lived and abnormal proteins. The chain is SUMO-conjugating enzyme UBC9 (UBC9) from Arabidopsis thaliana (Mouse-ear cress).